We begin with the raw amino-acid sequence, 320 residues long: o-succinylbenzoate synthase (320 aa).

Residue lysine 133 is the Proton donor of the active site. Mg(2+)-binding residues include aspartate 161, glutamate 190, and aspartate 213. Lysine 235 serves as the catalytic Proton acceptor.

Belongs to the mandelate racemase/muconate lactonizing enzyme family. MenC type 1 subfamily. It depends on a divalent metal cation as a cofactor.

It carries out the reaction (1R,6R)-6-hydroxy-2-succinyl-cyclohexa-2,4-diene-1-carboxylate = 2-succinylbenzoate + H2O. It functions in the pathway quinol/quinone metabolism; 1,4-dihydroxy-2-naphthoate biosynthesis; 1,4-dihydroxy-2-naphthoate from chorismate: step 4/7. The protein operates within quinol/quinone metabolism; menaquinone biosynthesis. Its function is as follows. Converts 2-succinyl-6-hydroxy-2,4-cyclohexadiene-1-carboxylate (SHCHC) to 2-succinylbenzoate (OSB). In Salmonella newport (strain SL254), this protein is o-succinylbenzoate synthase.